The following is a 417-amino-acid chain: Serine hydroxymethyltransferase (417 aa).

(6S)-5,6,7,8-tetrahydrofolate-binding positions include L121 and 125 to 127 (GHL). K229 bears the N6-(pyridoxal phosphate)lysine mark. 355 to 357 (SPF) contacts (6S)-5,6,7,8-tetrahydrofolate.

The protein belongs to the SHMT family. Homodimer. Pyridoxal 5'-phosphate is required as a cofactor.

It localises to the cytoplasm. The enzyme catalyses (6R)-5,10-methylene-5,6,7,8-tetrahydrofolate + glycine + H2O = (6S)-5,6,7,8-tetrahydrofolate + L-serine. Its pathway is one-carbon metabolism; tetrahydrofolate interconversion. The protein operates within amino-acid biosynthesis; glycine biosynthesis; glycine from L-serine: step 1/1. Catalyzes the reversible interconversion of serine and glycine with tetrahydrofolate (THF) serving as the one-carbon carrier. This reaction serves as the major source of one-carbon groups required for the biosynthesis of purines, thymidylate, methionine, and other important biomolecules. Also exhibits THF-independent aldolase activity toward beta-hydroxyamino acids, producing glycine and aldehydes, via a retro-aldol mechanism. This Enterobacter sp. (strain 638) protein is Serine hydroxymethyltransferase.